Consider the following 324-residue polypeptide: [Acyl-carrier-protein] phosphodiesterase PptH (324 aa).

Mn(2+) is bound by residues Asp22, His24, and Asp51. 4 residues coordinate Fe cation: Asp51, Asn79, His205, and His246. His248 contacts Mn(2+).

The protein belongs to the metallophosphoesterase superfamily. It depends on Fe(3+) as a cofactor. Mn(2+) serves as cofactor.

The catalysed reaction is holo-[ACP] + H2O = apo-[ACP] + (R)-4'-phosphopantetheine + H(+). In terms of biological role, catalyzes the hydrolysis of the phosphopantetheine group from substrate holo-carrier proteins. In Mycobacterium tuberculosis (strain ATCC 25618 / H37Rv), this protein is [Acyl-carrier-protein] phosphodiesterase PptH.